Here is a 467-residue protein sequence, read N- to C-terminus: Methylenetetrahydrofolate--tRNA-(uracil-5-)-methyltransferase TrmFO (467 aa).

Residue 10-15 coordinates FAD; that stretch reads GGGMAG.

It belongs to the MnmG family. TrmFO subfamily. It depends on FAD as a cofactor.

The protein resides in the cytoplasm. The enzyme catalyses uridine(54) in tRNA + (6R)-5,10-methylene-5,6,7,8-tetrahydrofolate + NADH + H(+) = 5-methyluridine(54) in tRNA + (6S)-5,6,7,8-tetrahydrofolate + NAD(+). The catalysed reaction is uridine(54) in tRNA + (6R)-5,10-methylene-5,6,7,8-tetrahydrofolate + NADPH + H(+) = 5-methyluridine(54) in tRNA + (6S)-5,6,7,8-tetrahydrofolate + NADP(+). Its function is as follows. Catalyzes the folate-dependent formation of 5-methyl-uridine at position 54 (M-5-U54) in all tRNAs. The sequence is that of Methylenetetrahydrofolate--tRNA-(uracil-5-)-methyltransferase TrmFO from Hyphomonas neptunium (strain ATCC 15444).